An 81-amino-acid polypeptide reads, in one-letter code: uncharacterized protein (81 aa).

This is an uncharacterized protein from Sulfolobus islandicus rod-shaped virus 1 (SIRV-1).